The primary structure comprises 575 residues: MRPWTGSWRWIMLILFAWGTLLFYIGGHLVRDNDHPDHSSRELSKILAKLERLKQQNEDLRRMAESLRIPEGPIDQAPASGRVRALEEQLLKAKEQIENYKKQTRNGLGKDHEILRRRIENGAKELWFFLQSELKKLKNLEGNVLQRHADEFLSDLGHHERSIMTDLYYLSQTDGAGDWREKEAKDLTELVQRRITYLQNPKDCSKAKKLVCNINKGCGYGCQLHHVVYCFMIAYGTQRTLILESQNWRYATGGWETVFRPVNETCTDRSGTSTGHWSGEVKDKNVQVVELPIVDSLHPRPPYLPLAVPEDLADRLVRVHGDPAVWWVSQFVKYLIRPQPWLEKEIEEATKKLGFNIPVIGVHVRRTDKVGTEAAFHPIEEYMVHVEEHFQLLARRMQVDKRRVYLATDDPSLLKEAKTKYPTYEFISDNSISWSAGLHNRYTENSLRGVILDIHFLSQADFLVCTFSSQVCRVAYEIMQTLHPDASANFHSLDDIYYFGGQNAHNQIAIYPHQPRTADEIPMEPGDIIGVAGNHWDGYSKGVNRKLGRTGLYPSYKVREKIETVKYPTYPEAEK.

The Cytoplasmic portion of the chain corresponds to 1–9; sequence MRPWTGSWR. Residues 10-30 form a helical; Signal-anchor for type II membrane protein membrane-spanning segment; sequence WIMLILFAWGTLLFYIGGHLV. The Lumenal segment spans residues 31–575; it reads RDNDHPDHSS…KYPTYPEAEK (545 aa). Cystine bridges form between cysteine 204/cysteine 266, cysteine 212/cysteine 230, and cysteine 218/cysteine 222. The region spanning 206–493 is the GT23 domain; sequence KAKKLVCNIN…PDASANFHSL (288 aa). Serine 278 is modified (phosphoserine). Positions 299–305 match the SH3-binding motif; that stretch reads PRPPYLP. Positions 365 to 366 are important for donor substrate binding; sequence RR. Cysteines 465 and 472 form a disulfide. In terms of domain architecture, SH3 spans 502 to 563; it reads QNAHNQIAIY…PSYKVREKIE (62 aa).

This sequence belongs to the glycosyltransferase 23 family. Post-translationally, tyrosine phosphorylated by PKDCC/VLK.

The protein localises to the golgi apparatus. It localises to the golgi stack membrane. The catalysed reaction is N(4)-{beta-D-GlcNAc-(1-&gt;2)-alpha-D-Man-(1-&gt;3)-[beta-D-GlcNAc-(1-&gt;2)-alpha-D-Man-(1-&gt;6)]-beta-D-Man-(1-&gt;4)-beta-D-GlcNAc-(1-&gt;4)-beta-D-GlcNAc}-L-asparaginyl-[protein] + GDP-beta-L-fucose = an N(4)-{beta-D-GlcNAc-(1-&gt;2)-alpha-D-Man-(1-&gt;3)-[beta-D-GlcNAc-(1-&gt;2)-alpha-D-Man-(1-&gt;6)]-beta-D-Man-(1-&gt;4)-beta-D-GlcNAc-(1-&gt;4)-[alpha-L-Fuc-(1-&gt;6)]-beta-D-GlcNAc}-L-asparaginyl-[protein] + GDP + H(+). It functions in the pathway protein modification; protein glycosylation. Functionally, catalyzes the addition of fucose in alpha 1-6 linkage to the first GlcNAc residue, next to the peptide chains in N-glycans. This is Alpha-(1,6)-fucosyltransferase (FUT8) from Canis lupus familiaris (Dog).